A 558-amino-acid chain; its full sequence is Leucine-rich repeat-containing protein 71 (558 aa).

Residues 1 to 18 (MSSEPSTTGTSPRTPRPG) are compositionally biased toward low complexity. Disordered regions lie at residues 1 to 55 (MSSE…NPEE) and 86 to 112 (RVQQ…SASC). Residues 28–38 (KKGDRAAKDKT) are compositionally biased toward basic and acidic residues. Polar residues predominate over residues 86–99 (RVQQSSVPSASTSE). LRR repeat units lie at residues 196 to 216 (TLRK…SKLM), 221 to 241 (TIVH…QLLG), 253 to 274 (TLVS…YIAD), and 281 to 302 (SLLW…KLAE). A disordered region spans residues 325–415 (GTQERSRSPS…DAAKAGKGKV (91 aa)). Composition is skewed to basic and acidic residues over residues 339–348 (GDSKAEREKS) and 380–391 (KTGEVVKKEEKL).

The chain is Leucine-rich repeat-containing protein 71 (Lrrc71) from Mus musculus (Mouse).